A 453-amino-acid chain; its full sequence is GTPase Der (453 aa).

2 consecutive EngA-type G domains span residues 4–169 (PIVA…SETP) and 177–352 (IKVA…RQFE). Residues 10–17 (GRPNVGKS), 57–61 (DTGGL), 120–123 (NKCE), 183–190 (GRPNVGKS), 230–234 (DTAGI), and 295–298 (NKWD) each bind GTP. In terms of domain architecture, KH-like spans 353 to 438 (QRVTTSVINE…PIRLLWRGKK (86 aa)).

It belongs to the TRAFAC class TrmE-Era-EngA-EngB-Septin-like GTPase superfamily. EngA (Der) GTPase family. In terms of assembly, associates with the 50S ribosomal subunit.

GTPase that plays an essential role in the late steps of ribosome biogenesis. The polypeptide is GTPase Der (Acaryochloris marina (strain MBIC 11017)).